The chain runs to 1293 residues: Enterobactin synthase component F (1293 aa).

The segment at 1–301 (MSQHLPLVAA…NVLPLGIHIA (301 aa)) is elongation/condensation. An adenylatione region spans residues 482-887 (SYREMREQVV…ALPDVEQAVT (406 aa)). A Carrier domain is found at 971-1046 (APKAGSETII…KLATIIDAEE (76 aa)). Ser-1006 is subject to O-(pantetheine 4'-phosphoryl)serine. The segment at 1066–1293 (PTLFCFHPAS…GPIIRATLNR (228 aa)) is thioesterase. His-1271 (proton acceptor; for thioesterase activity) is an active-site residue.

Belongs to the ATP-dependent AMP-binding enzyme family. EntF subfamily. In terms of assembly, proteins EntB, EntD, EntE and EntF are the component of the enterobactin synthase. Components probably do not form a stable complex. EntF acts as a catalytic monomer. Interacts with the MbtH-like protein YbdZ. YbdZ binds to the adenylation domain, but does not alter the structure of the domain. It depends on pantetheine 4'-phosphate as a cofactor. In terms of processing, 4'-phosphopantetheine is transferred from CoA to a specific serine of apo-EntF by EntD. Holo-EntF so formed is then acylated with seryl-AMP.

The protein resides in the cytoplasm. It carries out the reaction 3 2,3-dihydroxybenzoate + 3 L-serine + 6 ATP = enterobactin + 6 AMP + 6 diphosphate + 4 H(+). It catalyses the reaction holo-[peptidyl-carrier protein] + L-serine + ATP = L-seryl-[peptidyl-carrier protein] + AMP + diphosphate. It functions in the pathway siderophore biosynthesis; enterobactin biosynthesis. Its activity is regulated as follows. Adenylation activity is increased in the presence of the MbtH-like protein YbdZ. Involved in the biosynthesis of the siderophore enterobactin (enterochelin), which is a macrocyclic trimeric lactone of N-(2,3-dihydroxybenzoyl)-serine. EntF catalyzes the activation of L-serine via ATP-dependent PPi exchange reaction to form seryladenylate. Activated L-serine is loaded onto the peptidyl carrier domain via a thioester linkage to the phosphopanthetheine moiety, forming seryl-S-Ppant-EntF. EntF acts then as the sole catalyst for the formation of the three amide and three ester linkages found in enterobactin, using seryladenylate and 2,3-dihydroxybenzoate-S-Ppant-EntB (DHB-S-Ppant-EntB) as substrates, via the formation of a DHB-Ser-S-Ppant-EntF intermediate. In Escherichia coli (strain K12), this protein is Enterobactin synthase component F.